The primary structure comprises 172 residues: Large ribosomal subunit protein bL17 (172 aa).

The span at 140-160 (LKAEAKAKREEKKPAKKEEKP) shows a compositional bias: basic and acidic residues. The interval 140–172 (LKAEAKAKREEKKPAKKEEKPKKAKKEKAAASN) is disordered.

This sequence belongs to the bacterial ribosomal protein bL17 family. In terms of assembly, part of the 50S ribosomal subunit. Contacts protein L32.

The polypeptide is Large ribosomal subunit protein bL17 (Leptospira biflexa serovar Patoc (strain Patoc 1 / Ames)).